The following is an 802-amino-acid chain: Oligophrenin-1 (802 aa).

The 104-residue stretch at Q265–P368 folds into the PH domain. Residues M380 to Y564 form the Rho-GAP domain. Disordered stretches follow at residues Q641–E663 and T682–S802. Residues H716–G732 show a composition bias toward basic and acidic residues. Polar residues predominate over residues S751–A768.

Interacts with HOMER1. Interacts with AMPA receptor complexes. Interacts with SH3GL2 (endophilin-A1). Interacts (via C-terminus) with NR1D1. In terms of tissue distribution, high expression in brain, particularly in the cerebellum, hippocampus, thalamus, frontal lobes, sensory cortex. Found in the myelin sheaths of peripheral nerves, chromaffin cells within the adrenal medulla, and in extra-adrenal chromaffin cells associated with celiac ganglia.

The protein localises to the postsynapse. Its subcellular location is the presynapse. It is found in the cell projection. It localises to the axon. The protein resides in the dendritic spine. The protein localises to the dendrite. Its subcellular location is the cytoplasm. Stimulates GTP hydrolysis of members of the Rho family. Its action on RHOA activity and signaling is implicated in growth and stabilization of dendritic spines, and therefore in synaptic function, in hippocampal neurons. Critical for the stabilization of AMPA receptors at postsynaptic sites. Critical for the regulation of synaptic vesicle endocytosis at pre-synaptic terminals. Required for the localization of NR1D1 to dendrites, can suppress its repressor activity and protect it from proteasomal degradation. The sequence is that of Oligophrenin-1 (Ophn1) from Rattus norvegicus (Rat).